The sequence spans 446 residues: Tubulin beta chain (446 aa).

GTP is bound by residues Q11, E69, S138, G142, T143, G144, N204, and N226. E69 is a Mg(2+) binding site. The tract at residues Q426–M446 is disordered. Residues T429–M446 are compositionally biased toward acidic residues.

The protein belongs to the tubulin family. In terms of assembly, dimer of alpha and beta chains. A typical microtubule is a hollow water-filled tube with an outer diameter of 25 nm and an inner diameter of 15 nM. Alpha-beta heterodimers associate head-to-tail to form protofilaments running lengthwise along the microtubule wall with the beta-tubulin subunit facing the microtubule plus end conferring a structural polarity. Microtubules usually have 13 protofilaments but different protofilament numbers can be found in some organisms and specialized cells. The cofactor is Mg(2+).

It is found in the cytoplasm. The protein resides in the cytoskeleton. In terms of biological role, tubulin is the major constituent of microtubules, a cylinder consisting of laterally associated linear protofilaments composed of alpha- and beta-tubulin heterodimers. Microtubules grow by the addition of GTP-tubulin dimers to the microtubule end, where a stabilizing cap forms. Below the cap, tubulin dimers are in GDP-bound state, owing to GTPase activity of alpha-tubulin. The sequence is that of Tubulin beta chain from Euplotes crassus.